A 710-amino-acid polypeptide reads, in one-letter code: E3 ubiquitin-protein ligase TRIM9 (710 aa).

The segment at 10-50 (CPVCGSFYREPIILPCSHNLCQACARNILVQTPESESPQSR) adopts an RING-type zinc-finger fold. Thr-41 bears the Phosphothreonine mark. Phosphoserine is present on residues Ser-44, Ser-46, Ser-49, and Ser-53. 2 B box-type zinc fingers span residues 163 to 212 (AAAL…LVPP) and 224 to 266 (RKVS…VKAL). Zn(2+) is bound by residues Cys-168, Cys-171, Cys-193, His-198, Cys-229, His-232, Cys-252, and His-258. A coiled-coil region spans residues 273-340 (HKSQLSQALN…KAQLLARVNK (68 aa)). The 59-residue stretch at 374–432 (IKENDPSGFLQISDALIRRVHLTEDQWGKGTLTPRMTTDFDLSLDNSPLLQSIHQLDFV) folds into the COS domain. One can recognise a Fibronectin type-III domain in the interval 440–535 (VPATPILQLE…KTLVLQTSEV (96 aa)). The 170-residue stretch at 533–702 (SEVAWFAFDP…LHTGLPVPDF (170 aa)) folds into the B30.2/SPRY domain.

In terms of assembly, interacts with SNAP25. Auto-ubiquitinated. In terms of tissue distribution, brain (at protein level). Expressed in fetal and adult brain.

Its subcellular location is the cytoplasmic vesicle. The protein localises to the secretory vesicle. The protein resides in the synaptic vesicle. It is found in the synapse. It localises to the cytoplasm. Its subcellular location is the cytoskeleton. The protein localises to the cell projection. The protein resides in the dendrite. The catalysed reaction is S-ubiquitinyl-[E2 ubiquitin-conjugating enzyme]-L-cysteine + [acceptor protein]-L-lysine = [E2 ubiquitin-conjugating enzyme]-L-cysteine + N(6)-ubiquitinyl-[acceptor protein]-L-lysine.. It participates in protein modification; protein ubiquitination. In terms of biological role, E3 ubiquitin-protein ligase which ubiquitinates itself in cooperation with an E2 enzyme UBE2D2/UBC4 and serves as a targeting signal for proteasomal degradation. May play a role in regulation of neuronal functions. May act as a regulator of synaptic vesicle exocytosis by controlling the availability of SNAP25 for the SNARE complex formation. This Rattus norvegicus (Rat) protein is E3 ubiquitin-protein ligase TRIM9 (Trim9).